The sequence spans 67 residues: DNA-directed RNA polymerase subunit omega (67 aa).

Belongs to the RNA polymerase subunit omega family. The RNAP catalytic core consists of 2 alpha, 1 beta, 1 beta' and 1 omega subunit. When a sigma factor is associated with the core the holoenzyme is formed, which can initiate transcription.

The enzyme catalyses RNA(n) + a ribonucleoside 5'-triphosphate = RNA(n+1) + diphosphate. In terms of biological role, promotes RNA polymerase assembly. Latches the N- and C-terminal regions of the beta' subunit thereby facilitating its interaction with the beta and alpha subunits. The chain is DNA-directed RNA polymerase subunit omega from Nitrosomonas eutropha (strain DSM 101675 / C91 / Nm57).